The sequence spans 359 residues: tRNA-specific 2-thiouridylase MnmA (359 aa).

ATP is bound by residues 7 to 14 and leucine 33; that span reads GLSGGVDS. Residue cysteine 94 is the Nucleophile of the active site. A disulfide bond links cysteine 94 and cysteine 193. Glycine 119 lines the ATP pocket. The segment at 143 to 145 is interaction with tRNA; sequence KDQ. Cysteine 193 acts as the Cysteine persulfide intermediate in catalysis. The interval 298-299 is interaction with tRNA; that stretch reads RY.

The protein belongs to the MnmA/TRMU family.

The protein resides in the cytoplasm. The catalysed reaction is S-sulfanyl-L-cysteinyl-[protein] + uridine(34) in tRNA + AH2 + ATP = 2-thiouridine(34) in tRNA + L-cysteinyl-[protein] + A + AMP + diphosphate + H(+). In terms of biological role, catalyzes the 2-thiolation of uridine at the wobble position (U34) of tRNA, leading to the formation of s(2)U34. This Trichodesmium erythraeum (strain IMS101) protein is tRNA-specific 2-thiouridylase MnmA.